Here is a 97-residue protein sequence, read N- to C-terminus: Protein 9b (97 aa).

One can recognise a 9b domain in the interval 8–97 (VLPALHLVDP…PDEFVVVTAK (90 aa)).

Belongs to the coronavirus group 2 protein 9b family. As to quaternary structure, homodimer.

The protein localises to the host cytoplasmic vesicle membrane. It localises to the host cytoplasm. This chain is Protein 9b, found in Rhinolophus ferrumequinum (Greater horseshoe bat).